A 442-amino-acid chain; its full sequence is MAEEERALLGPDGGDGGSAAPPRALPAVCDPSRLPHRLLVLALMCFLGFGSCFCYDNPAALQTQVQGDMKVNTARFMALYAWLGTVIFSIFVCVGQVIFALGALVNAFWLMEVGRFIFGIGGESLAVAQNTYAVSWFKGKELNLVFGLQLSMARIGSTVNMNIMGWIYSRVQDLLGHTGHATLGLTLLIGGITCLFSLACALILAYLDKRAEKLLCKEQGKTGEVIKLTDVKNFSLSLWLIFVICVCYYAAVFPFIGLGKVFFIEKFQFSSQEASAINSVVYIISAPMSPVFGILVDKVGKNIIWVLCAVITTLASHIMLAFTFWNPWIAMCLLGVAYSLLACALWPMVAFVVPEHQLGTAYGFMQSIQNLGLAVIAIAAGMILDTRGYLFLEVFFSACVSLSLVAVVMLYFVNHLTGGDLNWSAKKREKLQKVAANDLLYC.

The short motif at 8–9 (LL) is the Dileucine internalization motif element. Transmembrane regions (helical) follow at residues 38 to 58 (LLVLALMCFLGFGSCFCYDNP), 85 to 105 (TVIFSIFVCVGQVIFALGALV), 107 to 127 (AFWLMEVGRFIFGIGGESLAV), 187 to 207 (LLIGGITCLFSLACALILAYL), 238 to 258 (LWLIFVICVCYYAAVFPFIGL), 276 to 296 (AINSVVYIISAPMSPVFGILV), 303 to 323 (IIWVLCAVITTLASHIMLAFT), 333 to 353 (LLGVAYSLLACALWPMVAFVV), 364 to 384 (FMQSIQNLGLAVIAIAAGMIL), and 390 to 410 (LFLEVFFSACVSLSLVAVVML).

Belongs to the major facilitator superfamily. In terms of assembly, homodimer. Interacts with lysosomal protein GLMP (via lumenal domain); the interaction starts while both proteins are still in the endoplasmic reticulum and is required for stabilization of MFSD1 in lysosomes but has no direct effect on its targeting to lysosomes or transporter activity.

Its subcellular location is the lysosome membrane. It catalyses the reaction L-alpha-aminoacyl-L-arginine(out) = L-alpha-aminoacyl-L-arginine(in). The catalysed reaction is L-arginyl-L-alpha-amino acid(out) = L-arginyl-L-alpha-amino acid(in). It carries out the reaction L-arginyl-glycine(out) = L-arginyl-glycine(in). The enzyme catalyses L-alpha-aminoacyl-L-lysine(out) = L-alpha-aminoacyl-L-lysine(in). It catalyses the reaction L-aspartyl-L-lysine(out) = L-aspartyl-L-lysine(in). The catalysed reaction is L-alanyl-L-lysine(out) = L-alanyl-L-lysine(in). It carries out the reaction L-lysyl-L-alpha-amino acid(out) = L-lysyl-L-alpha-amino acid(in). The enzyme catalyses L-lysyl-L-alanine(out) = L-lysyl-L-alanine(in). It catalyses the reaction L-lysyl-L-lysine(out) = L-lysyl-L-lysine(in). The catalysed reaction is L-lysyl-glycine(out) = L-lysyl-glycine(in). It carries out the reaction L-alpha-aminoacyl-L-histidine(out) = L-alpha-aminoacyl-L-histidine(in). The enzyme catalyses L-histidyl-L-alpha-amino acid(out) = L-histidyl-L-alpha-amino acid(in). It catalyses the reaction L-histidyl-glycine(out) = L-histidyl-glycine(in). Lysosomal dipeptide uniporter that selectively exports lysine, arginine or histidine-containing dipeptides with a net positive charge from the lysosome lumen into the cytosol. Could play a role in a specific type of protein O-glycosylation indirectly regulating macrophages migration and tissue invasion. Also essential for liver homeostasis. The sequence is that of Lysosomal dipeptide transporter MFSD1 from Gallus gallus (Chicken).